Reading from the N-terminus, the 404-residue chain is Probable tRNA sulfurtransferase (404 aa).

Residues 60–165 form the THUMP domain; that stretch reads HEVAESLKEI…DEAAYISYEN (106 aa). Residues 183 to 184, 208 to 209, R265, G287, and Q296 contribute to the ATP site; these read ML and HF.

Belongs to the ThiI family.

The protein resides in the cytoplasm. The enzyme catalyses [ThiI sulfur-carrier protein]-S-sulfanyl-L-cysteine + a uridine in tRNA + 2 reduced [2Fe-2S]-[ferredoxin] + ATP + H(+) = [ThiI sulfur-carrier protein]-L-cysteine + a 4-thiouridine in tRNA + 2 oxidized [2Fe-2S]-[ferredoxin] + AMP + diphosphate. It catalyses the reaction [ThiS sulfur-carrier protein]-C-terminal Gly-Gly-AMP + S-sulfanyl-L-cysteinyl-[cysteine desulfurase] + AH2 = [ThiS sulfur-carrier protein]-C-terminal-Gly-aminoethanethioate + L-cysteinyl-[cysteine desulfurase] + A + AMP + 2 H(+). The protein operates within cofactor biosynthesis; thiamine diphosphate biosynthesis. Functionally, catalyzes the ATP-dependent transfer of a sulfur to tRNA to produce 4-thiouridine in position 8 of tRNAs, which functions as a near-UV photosensor. Also catalyzes the transfer of sulfur to the sulfur carrier protein ThiS, forming ThiS-thiocarboxylate. This is a step in the synthesis of thiazole, in the thiamine biosynthesis pathway. The sulfur is donated as persulfide by IscS. In Streptococcus agalactiae serotype Ia (strain ATCC 27591 / A909 / CDC SS700), this protein is Probable tRNA sulfurtransferase.